Reading from the N-terminus, the 230-residue chain is Porin OmpL (230 aa).

An N-terminal signal peptide occupies residues 1 to 20 (MKSLNTLVILTSVISTSVFA).

This sequence belongs to the oligogalacturonate-specific porin KdgM (TC 1.B.35) family. OmpL subfamily.

It is found in the cell outer membrane. In terms of biological role, outer membrane channel protein that allows an efficient diffusion of low-molecular-weight solutes such as small sugars and tetraglycine. However, the specific substrate recognized by the OmpL channel is unknown. The chain is Porin OmpL (ompL) from Salmonella typhimurium (strain LT2 / SGSC1412 / ATCC 700720).